Here is a 131-residue protein sequence, read N- to C-terminus: Small ribosomal subunit protein uS11 (131 aa).

It belongs to the universal ribosomal protein uS11 family. As to quaternary structure, part of the 30S ribosomal subunit. Interacts with proteins S7 and S18. Binds to IF-3.

Located on the platform of the 30S subunit, it bridges several disparate RNA helices of the 16S rRNA. Forms part of the Shine-Dalgarno cleft in the 70S ribosome. This chain is Small ribosomal subunit protein uS11, found in Exiguobacterium sp. (strain ATCC BAA-1283 / AT1b).